A 145-amino-acid polypeptide reads, in one-letter code: Peptidyl-lysine N-acetyltransferase YjaB (145 aa).

The 142-residue stretch at 3-144 folds into the N-acetyltransferase domain; that stretch reads INIRRSRHEE…KPYPLLNLIY (142 aa).

Belongs to the acetyltransferase family.

It catalyses the reaction L-lysyl-[protein] + acetyl-CoA = N(6)-acetyl-L-lysyl-[protein] + CoA + H(+). Its function is as follows. N-epsilon-lysine acetyltransferase that catalyzes acetylation of a large number of proteins. This is Peptidyl-lysine N-acetyltransferase YjaB (yjaB) from Salmonella typhimurium (strain LT2 / SGSC1412 / ATCC 700720).